We begin with the raw amino-acid sequence, 279 residues long: MKLLEKMIYVEFLMIIMAMWVVPMSYGHGAMIGNAVEAPDVAEAPGINDPSKALDPNWYDARATFYGDIHGGDTQQGACGYGNLFRQGYGLATAALSTALFNDGYTCGACYEIMCTRDPQWCLPGSVKITATNFCPANYSKTTDLWCNPPQKHFDLSLAMFLKIAKYKAGVVPVRYRRIPCSKTGGVKFETKGNPYFLMVLIYNVGGAGDIKYVQVKENKTGWITMKKNWGQNWTTSTVLTGQGLSFRVTTTDGITKDFWNVMPKNWGFGQTFDGKINF.

An N-terminal signal peptide occupies residues 1–27; sequence MKLLEKMIYVEFLMIIMAMWVVPMSYG. In terms of domain architecture, Expansin-like EG45 spans 76–186; the sequence is QGACGYGNLF…RRIPCSKTGG (111 aa). Residues 196–275 form the Expansin-like CBD domain; sequence YFLMVLIYNV…NWGFGQTFDG (80 aa).

This sequence belongs to the expansin family. Expansin A subfamily.

The protein resides in the secreted. Its subcellular location is the cell wall. The protein localises to the membrane. In terms of biological role, causes loosening and extension of plant cell walls by disrupting non-covalent bonding between cellulose microfibrils and matrix glucans. No enzymatic activity has been found. In Arabidopsis thaliana (Mouse-ear cress), this protein is Putative expansin-A26 (EXPA26).